A 221-amino-acid chain; its full sequence is Protein myomaker (221 aa).

Over 1 to 3 (MGT) the chain is Extracellular. A helical membrane pass occupies residues 4-24 (LVAKLLLPTLSSLAFLPTVSI). The Cytoplasmic portion of the chain corresponds to 25–34 (AAKRRFHMEA). The helical transmembrane segment at 35–55 (MVYLFTLFFVALHHACNGPGL) threads the bilayer. Residues 56–64 (SVLCFMRHD) are Extracellular-facing. The helical transmembrane segment at 65–85 (ILEYFSVYGTALSMWVSLMAL) threads the bilayer. Residues 86–92 (ADFDEPK) are Cytoplasmic-facing. Residues 93–110 (RSTFVMFGVLTIAVRIYH) form a helical membrane-spanning segment. The Extracellular segment spans residues 111–113 (DRW). The helical transmembrane segment at 114 to 134 (GYGVYSGPIGTAILIIAAKWL) threads the bilayer. Residues 135–153 (QKMKEKKGLYPDKSVYTQQ) are Cytoplasmic-facing. Residues 154–174 (IGPGLCFGALALMLRFFFEDW) traverse the membrane as a helical segment. Residue Asp175 is a topological domain, extracellular. A helical membrane pass occupies residues 176–196 (YTYVHSFYHCALAMSFVLLLP). At 197–221 (KVNKKAGSPGTPAKLDCSTLCCACV) the chain is on the cytoplasmic side. Residues Cys217 and Cys218 are each lipidated (S-palmitoyl cysteine).

This sequence belongs to the TMEM8 family. Interacts with MYMX. Palmitoylated at the C-terminus; palmitoylation promotes localization to the Golgi apparatus.

The protein localises to the cell membrane. Its subcellular location is the golgi apparatus membrane. Functionally, myoblast-specific protein that mediates myoblast fusion, an essential step for the formation of multi-nucleated muscle fibers. Actively participates in the membrane fusion reaction by mediating the mixing of cell membrane lipids (hemifusion) upstream of MYMX. Acts independently of MYMX. Involved in skeletal muscle regeneration in response to injury by mediating the fusion of satellite cells, a population of muscle stem cells, with injured myofibers. Also involved in skeletal muscle hypertrophy, probably by mediating the fusion of satellite cells with myofibers. The protein is Protein myomaker of Homo sapiens (Human).